A 317-amino-acid polypeptide reads, in one-letter code: ADP-L-glycero-D-manno-heptose-6-epimerase (317 aa).

NADP(+) contacts are provided by residues 10–11, 31–32, Lys-38, Lys-53, 76–80, and Asn-93; these read FI, DD, and QGACS. Tyr-140 acts as the Proton acceptor in catalysis. Lys-144 serves as a coordination point for NADP(+). Asn-169 provides a ligand contact to substrate. The NADP(+) site is built by Ile-170 and Lys-178. The Proton acceptor role is filled by Lys-178. Substrate contacts are provided by residues Ala-180, His-187, 201-204, Arg-214, and Tyr-278; that span reads FEGC.

This sequence belongs to the NAD(P)-dependent epimerase/dehydratase family. HldD subfamily. Homopentamer. NADP(+) serves as cofactor.

The enzyme catalyses ADP-D-glycero-beta-D-manno-heptose = ADP-L-glycero-beta-D-manno-heptose. Its pathway is nucleotide-sugar biosynthesis; ADP-L-glycero-beta-D-manno-heptose biosynthesis; ADP-L-glycero-beta-D-manno-heptose from D-glycero-beta-D-manno-heptose 7-phosphate: step 4/4. Its function is as follows. Catalyzes the interconversion between ADP-D-glycero-beta-D-manno-heptose and ADP-L-glycero-beta-D-manno-heptose via an epimerization at carbon 6 of the heptose. The polypeptide is ADP-L-glycero-D-manno-heptose-6-epimerase (Nitrosococcus oceani (strain ATCC 19707 / BCRC 17464 / JCM 30415 / NCIMB 11848 / C-107)).